The sequence spans 406 residues: Argininosuccinate synthase (406 aa).

8-16 contacts ATP; it reads AYSGGLDTT. 2 residues coordinate L-citrulline: tyrosine 86 and serine 91. Residue glycine 116 coordinates ATP. 3 residues coordinate L-aspartate: threonine 118, asparagine 122, and aspartate 123. Residue asparagine 122 coordinates L-citrulline. The L-citrulline site is built by arginine 126, serine 175, serine 184, glutamate 261, and tyrosine 273.

This sequence belongs to the argininosuccinate synthase family. Type 1 subfamily. In terms of assembly, homotetramer.

Its subcellular location is the cytoplasm. The catalysed reaction is L-citrulline + L-aspartate + ATP = 2-(N(omega)-L-arginino)succinate + AMP + diphosphate + H(+). It functions in the pathway amino-acid biosynthesis; L-arginine biosynthesis; L-arginine from L-ornithine and carbamoyl phosphate: step 2/3. The polypeptide is Argininosuccinate synthase (Brachyspira hyodysenteriae (strain ATCC 49526 / WA1)).